The chain runs to 140 residues: uncharacterized protein (140 aa).

Positions 62-140 are disordered; that stretch reads TEARAGRGGP…PQGRWGPSLG (79 aa). A compositionally biased stretch (low complexity) spans 71–94; that stretch reads PATARSRVSADSQGGRAGSSSPSS.

This is an uncharacterized protein from Homo sapiens (Human).